A 714-amino-acid chain; its full sequence is Polyribonucleotide nucleotidyltransferase (714 aa).

Aspartate 488 and aspartate 494 together coordinate Mg(2+). In terms of domain architecture, KH spans proline 555–isoleucine 614. Residues glycine 624–lysine 692 enclose the S1 motif domain.

The protein belongs to the polyribonucleotide nucleotidyltransferase family. It depends on Mg(2+) as a cofactor.

The protein resides in the cytoplasm. It carries out the reaction RNA(n+1) + phosphate = RNA(n) + a ribonucleoside 5'-diphosphate. In terms of biological role, involved in mRNA degradation. Catalyzes the phosphorolysis of single-stranded polyribonucleotides processively in the 3'- to 5'-direction. In Sinorhizobium medicae (strain WSM419) (Ensifer medicae), this protein is Polyribonucleotide nucleotidyltransferase.